The following is a 312-amino-acid chain: Putative 1-aminocyclopropane-1-carboxylate deaminase (312 aa).

Lys42 is subject to N6-(pyridoxal phosphate)lysine.

This sequence belongs to the ACC deaminase/D-cysteine desulfhydrase family. It depends on pyridoxal 5'-phosphate as a cofactor.

The catalysed reaction is 1-aminocyclopropane-1-carboxylate + H2O = 2-oxobutanoate + NH4(+). The protein is Putative 1-aminocyclopropane-1-carboxylate deaminase of Thermotoga maritima (strain ATCC 43589 / DSM 3109 / JCM 10099 / NBRC 100826 / MSB8).